Reading from the N-terminus, the 277-residue chain is Hydroxyethylthiazole kinase (277 aa).

Met-55 is a substrate binding site. Residues Arg-130 and Ser-176 each contribute to the ATP site. Gly-203 contacts substrate.

Belongs to the Thz kinase family. It depends on Mg(2+) as a cofactor.

The catalysed reaction is 5-(2-hydroxyethyl)-4-methylthiazole + ATP = 4-methyl-5-(2-phosphooxyethyl)-thiazole + ADP + H(+). Its pathway is cofactor biosynthesis; thiamine diphosphate biosynthesis; 4-methyl-5-(2-phosphoethyl)-thiazole from 5-(2-hydroxyethyl)-4-methylthiazole: step 1/1. In terms of biological role, catalyzes the phosphorylation of the hydroxyl group of 4-methyl-5-beta-hydroxyethylthiazole (THZ). In Cutibacterium acnes (strain DSM 16379 / KPA171202) (Propionibacterium acnes), this protein is Hydroxyethylthiazole kinase.